The primary structure comprises 128 residues: Large ribosomal subunit protein bL17 (128 aa).

It belongs to the bacterial ribosomal protein bL17 family. Part of the 50S ribosomal subunit. Contacts protein L32.

This chain is Large ribosomal subunit protein bL17, found in Streptococcus suis (strain 98HAH33).